The following is a 465-amino-acid chain: UDP-glycosyltransferase 89A2 (465 aa).

UDP-alpha-D-glucose-binding positions include S291, 342-344, 359-367, and 381-384; these read VSQ, HCGWNSVLE, and EADQ.

This sequence belongs to the UDP-glycosyltransferase family.

In terms of biological role, glucosyltransferase that glucosylates benzoates and benzoate derivatives in vitro. This chain is UDP-glycosyltransferase 89A2 (UGT89A2), found in Arabidopsis thaliana (Mouse-ear cress).